The primary structure comprises 56 residues: Pituitary adenylate cyclase-activating polypeptide (56 aa).

Residues 42-50 (VKKYLAAVL) are important for receptor binding. Leu-50 carries the post-translational modification Leucine amide.

It belongs to the glucagon family. In terms of assembly, interacts with ADCYAP1R1 (via N-terminal extracellular domain).

It localises to the secreted. In terms of biological role, PACAP is a neuropeptide involved in diverse array of physiological processes through activating the PACAP subfamily of class B1 G protein-coupled receptors: VIP receptor 1 (VIPR1), VIP receptor 2 (VIPR2), and PACAP type I receptor (ADCYAP1R1). Exerts neuroprotective and general cytoprotective effects due to anti-apoptotic, anti-inflammatory, and antioxidant actions. This is Pituitary adenylate cyclase-activating polypeptide (Adcyap1) from Heloderma suspectum (Gila monster).